A 149-amino-acid chain; its full sequence is Macrodomain Ter protein (149 aa).

Belongs to the MatP family. As to quaternary structure, homodimer.

It is found in the cytoplasm. Functionally, required for spatial organization of the terminus region of the chromosome (Ter macrodomain) during the cell cycle. Prevents early segregation of duplicated Ter macrodomains during cell division. Binds specifically to matS, which is a 13 bp signature motif repeated within the Ter macrodomain. This is Macrodomain Ter protein from Vibrio parahaemolyticus serotype O3:K6 (strain RIMD 2210633).